Here is a 729-residue protein sequence, read N- to C-terminus: Fatty acid oxidation complex subunit alpha (729 aa).

Residues 1–189 are enoyl-CoA hydratase/isomerase; that stretch reads MLYQGETLQL…KVGLVDAVVA (189 aa). D296 serves as a coordination point for substrate. The interval 311 to 729 is 3-hydroxyacyl-CoA dehydrogenase; the sequence is EAPKQAAVLG…LSDVSTGQPA (419 aa). NAD(+) is bound by residues M324, D343, 400-402, K407, and S429; that span reads VVE. H450 acts as the For 3-hydroxyacyl-CoA dehydrogenase activity in catalysis. N453 contributes to the NAD(+) binding site. N500 and Y660 together coordinate substrate.

This sequence in the N-terminal section; belongs to the enoyl-CoA hydratase/isomerase family. The protein in the C-terminal section; belongs to the 3-hydroxyacyl-CoA dehydrogenase family. Heterotetramer of two alpha chains (FadB) and two beta chains (FadA).

It carries out the reaction a (3S)-3-hydroxyacyl-CoA + NAD(+) = a 3-oxoacyl-CoA + NADH + H(+). The enzyme catalyses a (3S)-3-hydroxyacyl-CoA = a (2E)-enoyl-CoA + H2O. The catalysed reaction is a 4-saturated-(3S)-3-hydroxyacyl-CoA = a (3E)-enoyl-CoA + H2O. It catalyses the reaction (3S)-3-hydroxybutanoyl-CoA = (3R)-3-hydroxybutanoyl-CoA. It carries out the reaction a (3Z)-enoyl-CoA = a 4-saturated (2E)-enoyl-CoA. The enzyme catalyses a (3E)-enoyl-CoA = a 4-saturated (2E)-enoyl-CoA. Its pathway is lipid metabolism; fatty acid beta-oxidation. In terms of biological role, involved in the aerobic and anaerobic degradation of long-chain fatty acids via beta-oxidation cycle. Catalyzes the formation of 3-oxoacyl-CoA from enoyl-CoA via L-3-hydroxyacyl-CoA. It can also use D-3-hydroxyacyl-CoA and cis-3-enoyl-CoA as substrate. In Serratia proteamaculans (strain 568), this protein is Fatty acid oxidation complex subunit alpha.